Reading from the N-terminus, the 306-residue chain is Aspartate carbamoyltransferase catalytic subunit (306 aa).

Residues Arg51 and Thr52 each contribute to the carbamoyl phosphate site. Lys79 contacts L-aspartate. The carbamoyl phosphate site is built by Arg101, His129, and Gln132. Residues Arg162 and Arg213 each contribute to the L-aspartate site. Ala254 and Pro255 together coordinate carbamoyl phosphate.

This sequence belongs to the aspartate/ornithine carbamoyltransferase superfamily. ATCase family. As to quaternary structure, heterododecamer (2C3:3R2) of six catalytic PyrB chains organized as two trimers (C3), and six regulatory PyrI chains organized as three dimers (R2).

It carries out the reaction carbamoyl phosphate + L-aspartate = N-carbamoyl-L-aspartate + phosphate + H(+). Its pathway is pyrimidine metabolism; UMP biosynthesis via de novo pathway; (S)-dihydroorotate from bicarbonate: step 2/3. In terms of biological role, catalyzes the condensation of carbamoyl phosphate and aspartate to form carbamoyl aspartate and inorganic phosphate, the committed step in the de novo pyrimidine nucleotide biosynthesis pathway. The sequence is that of Aspartate carbamoyltransferase catalytic subunit from Bacillus thuringiensis (strain Al Hakam).